Consider the following 274-residue polypeptide: Large ribosomal subunit protein uL2cz/uL2cy (274 aa).

A disordered region spans residues 225-274 (PVDHPHGGGEGRAPIGRKKPVTPWGYPALGRRTRKRKKYSETLILRRRSK).

The protein belongs to the universal ribosomal protein uL2 family. Part of the 50S ribosomal subunit.

It localises to the plastid. Its subcellular location is the chloroplast. In Crucihimalaya wallichii (Rock-cress), this protein is Large ribosomal subunit protein uL2cz/uL2cy (rpl2-A).